The primary structure comprises 137 residues: Histone H2B (137 aa).

Residues 1 to 10 (MPPKPADKKP) are compositionally biased toward basic and acidic residues. The disordered stretch occupies residues 1-45 (MPPKPADKKPASKAPATASKAPEKKDAGKKTAASGDKKKRTKARK). Residues K8 and K9 each carry the N6-acetyllysine; alternate modification. Glycyl lysine isopeptide (Lys-Gly) (interchain with G-Cter in SUMO); alternate cross-links involve residues K8 and K9. S12 is modified (phosphoserine). At K13 the chain carries N6-acetyllysine. K24 bears the N6-acetyllysine; alternate mark. K24 participates in a covalent cross-link: Glycyl lysine isopeptide (Lys-Gly) (interchain with G-Cter in SUMO); alternate. Residue K25 forms a Glycyl lysine isopeptide (Lys-Gly) (interchain with G-Cter in SUMO) linkage. K131 is covalently cross-linked (Glycyl lysine isopeptide (Lys-Gly) (interchain with G-Cter in ubiquitin)).

This sequence belongs to the histone H2B family. The nucleosome is a histone octamer containing two molecules each of H2A, H2B, H3 and H4 assembled in one H3-H4 heterotetramer and two H2A-H2B heterodimers. The octamer wraps approximately 147 bp of DNA. Post-translationally, monoubiquitinated by the ubc-2-bre-1 complex to form H2BK123ub1. H2BK123ub1 gives a specific tag for epigenetic transcriptional activation and is also prerequisite for H3K4me and H3K79me formation. H2BK123ub1 also modulates the formation of double-strand breaks during meiosis and is a prerequisite for DNA-damage checkpoint activation. In terms of processing, phosphorylated by ste-20 to form H2BS10ph during progression through meiotic prophase. May be correlated with chromosome condensation. Acetylated by gcn-5 to form H2BK11ac and H2BK16ac. H2BK16ac can also be formed by esa-1. Acetylation of N-terminal lysines and particularly formation of H2BK11acK16ac has a positive effect on transcription. Post-translationally, sumoylation to form H2BK6su or H2BK7su, and probably also H2BK16su or H2BK17su, occurs preferentially near the telomeres and represses gene transcription.

It localises to the nucleus. The protein localises to the chromosome. Its function is as follows. Core component of nucleosome. Nucleosomes wrap and compact DNA into chromatin, limiting DNA accessibility to the cellular machineries which require DNA as a template. Histones thereby play a central role in transcription regulation, DNA repair, DNA replication and chromosomal stability. DNA accessibility is regulated via a complex set of post-translational modifications of histones, also called histone code, and nucleosome remodeling. The polypeptide is Histone H2B (hh2b) (Neurospora crassa (strain ATCC 24698 / 74-OR23-1A / CBS 708.71 / DSM 1257 / FGSC 987)).